Here is a 154-residue protein sequence, read N- to C-terminus: N-acetylneuraminate anomerase NanQ (154 aa).

It belongs to the NanQ anomerase family. It depends on Zn(2+) as a cofactor.

Its subcellular location is the cytoplasm. The catalysed reaction is N-acetyl-alpha-neuraminate = aceneuramate. It catalyses the reaction N-acetyl-beta-neuraminate = aceneuramate. With respect to regulation, inhibited by 1,10-phenanthroline. Functionally, opens both the alpha- and beta-forms of N-acetylneuraminate (sialic acid; Neu5Ac) to provide aceneuramate, the preferred substrate for NanA. Has preferential activity on the beta-anomer rather than the alpha-anomer. Accelerates a reaction that is spontaneous at slightly alkaline pH, facilitates the reaction at acidic pH. The polypeptide is N-acetylneuraminate anomerase NanQ (Escherichia coli (strain K12)).